The following is a 202-amino-acid chain: Small ribosomal subunit protein uS4 (202 aa).

The span at 1 to 13 (MSRYRGPRLRITR) shows a compositional bias: basic residues. The interval 1 to 43 (MSRYRGPRLRITRRLGDLPGLTRKAAKRSHPPGQHGQARRKRS) is disordered. Residues 90 to 152 (NRLDNVCFRL…KASKQLAQAN (63 aa)) form the S4 RNA-binding domain.

Belongs to the universal ribosomal protein uS4 family. In terms of assembly, part of the 30S ribosomal subunit. Contacts protein S5. The interaction surface between S4 and S5 is involved in control of translational fidelity.

One of the primary rRNA binding proteins, it binds directly to 16S rRNA where it nucleates assembly of the body of the 30S subunit. Its function is as follows. With S5 and S12 plays an important role in translational accuracy. The protein is Small ribosomal subunit protein uS4 of Prochlorococcus marinus (strain NATL2A).